The primary structure comprises 1827 residues: Phenolphthiocerol/phthiocerol polyketide synthase subunit C (1827 aa).

Residues 35–461 (CEPVAVVGIG…GTNAHVVVEQ (427 aa)) enclose the Ketosynthase family 3 (KS3) domain. Residues Cys-207, His-342, and His-383 each act as for beta-ketoacyl synthase activity in the active site. Positions 566–876 (VFVYSGQGSQ…LAAVGVAASE (311 aa)) are acyltransferase. Catalysis depends on Ser-654, which acts as the For malonyltransferase activity. The interval 910 to 1037 (HPLLGAHIEM…AKVEQSPREC (128 aa)) is N-terminal hotdog fold. Residues 910–1076 (HPLLGAHIEM…QHHGPAFAAL (167 aa)) are dehydratase. One can recognise a PKS/mFAS DH domain in the interval 910–1198 (HPLLGAHIEM…LRRVERRAVP (289 aa)). His-942 acts as the Proton acceptor; for dehydratase activity in catalysis. Residues 1050 to 1198 (GTTVSPADFY…LRRVERRAVP (149 aa)) form a C-terminal hotdog fold region. Catalysis depends on Asp-1111, which acts as the Proton donor; for dehydratase activity. Residues 1439 to 1617 (ASYVVTGGLG…VINWGPWSEV (179 aa)) are beta-ketoacyl reductase. An NADP(+)-binding site is contributed by 1440-1485 (SYVVTGGLGGLGLVVARWLVDRGAGRVVLGGRSDPTDEQCNVLAEL). In terms of domain architecture, Carrier spans 1706–1785 (RAVTERMCAR…DLTADLMRQL (80 aa)). Ser-1745 carries the O-(pantetheine 4'-phosphoryl)serine modification.

NADP(+) is required as a cofactor. Pantetheine 4'-phosphate serves as cofactor.

The catalysed reaction is icosanoyl-[(phenol)carboxyphthiodiolenone synthase] + 2 (S)-methylmalonyl-CoA + 3 malonyl-CoA + 5 NADPH + 10 H(+) = C32-carboxyphthiodiolenone-[(phenol)carboxyphthiodiolenone synthase] + 5 CO2 + 5 NADP(+) + 5 CoA + 2 H2O. It carries out the reaction docosanoyl-[(phenol)carboxyphthiodiolenone synthase] + 2 (S)-methylmalonyl-CoA + 3 malonyl-CoA + 5 NADPH + 10 H(+) = C34-carboxyphthiodiolenone-[(phenol)carboxyphthiodiolenone synthase] + 5 CO2 + 5 NADP(+) + 5 CoA + 2 H2O. The enzyme catalyses 17-(4-hydroxyphenyl)heptadecanoyl-[(phenol)carboxyphthiodiolenone synthase] + 2 (S)-methylmalonyl-CoA + 3 malonyl-CoA + 5 NADPH + 10 H(+) = C35-(phenol)carboxyphthiodiolenone-[(phenol)carboxyphthiodiolenone synthase] + 5 CO2 + 5 NADP(+) + 5 CoA + 2 H2O. It catalyses the reaction 19-(4-hydroxyphenyl)nonadecanoyl-[(phenol)carboxyphthiodiolenone synthase] + 2 (S)-methylmalonyl-CoA + 3 malonyl-CoA + 5 NADPH + 10 H(+) = C37-(phenol)carboxyphthiodiolenone-[(phenol)carboxyphthiodiolenone synthase] + 5 CO2 + 5 NADP(+) + 5 CoA + 2 H2O. It functions in the pathway lipid metabolism; fatty acid biosynthesis. Part of the PpsABCDE complex involved in the biosynthesis of the lipid core common to phthiocerols and phenolphthiocerols by successive additions of malonyl-CoA or methylmalonyl-CoA extender units. PpsA can accept as substrate the activated forms of either icosanoyl (C20), docosanoyl (C22) or lignoceroyl (C24) groups from FadD26, or a (4-hydroxyphenyl)-C17 or (4-hydroxyphenyl)-C19 fatty acyl from FadD29. PpsA initiates the biosynthesis and extends its substrate using a malonyl-CoA extender unit. The PpsB and PpsC proteins add the second and third malonyl-CoA extender units. PpsD adds an (R)-methylmalonyl unit and PpsE adds a second (R)-methylmalonyl unit. The incorporation of the methylmalonyl units results in formation of two branched methyl groups in the elongated product. The sequence is that of Phenolphthiocerol/phthiocerol polyketide synthase subunit C (ppsD) from Mycobacterium bovis (strain ATCC BAA-935 / AF2122/97).